A 520-amino-acid chain; its full sequence is Fumarate hydratase, mitochondrial (520 aa).

Residues 1 to 39 constitute a mitochondrion transit peptide; it reads MASVAHISTAKAIFRAGGLPCRRLITPTLTGLPLKTHRM. Substrate-binding positions include 153–155, 184–187, 194–196, and Thr-242; these read SGT, HPND, and SSN. Residue His-243 is the Proton donor/acceptor of the active site. Ser-373 is an active-site residue. Substrate is bound by residues Ser-374 and 379-381; that span reads KVN.

It belongs to the class-II fumarase/aspartase family. Fumarase subfamily. Homotetramer.

It localises to the mitochondrion matrix. It is found in the cytoplasm. The protein resides in the nucleus. It carries out the reaction (S)-malate = fumarate + H2O. The protein operates within carbohydrate metabolism; tricarboxylic acid cycle; (S)-malate from fumarate: step 1/1. Its function is as follows. Catalyzes the reversible stereospecific interconversion of fumarate to L-malate. In mitochondrion, catalyzes the hydration of fumarate to L-malate in the tricarboxylic acid (TCA) cycle to facilitate a transition step in the production of energy in the form of NADH. In cytoplasm and nucleus, involved in DNA repair in response to DNA damage: following DNA double-strand breaks (DSBs), translocates from the cytosol to the nucleus and promotes DNA repair by catalyzing the dehydration of L-malate to fumarate. The protein is Fumarate hydratase, mitochondrial (fum1) of Schizosaccharomyces pombe (strain 972 / ATCC 24843) (Fission yeast).